Consider the following 536-residue polypeptide: MFS-type efflux pump MFS1 (536 aa).

The next 3 membrane-spanning stretches (helical) occupy residues 30 to 50 (VTGL…LLVA), 80 to 100 (YLLT…FFPV), and 102 to 122 (WVFL…GAAP). Asparagine 123 is a glycosylation site (N-linked (GlcNAc...) asparagine). The next 3 helical transmembrane spans lie at 133–153 (VAGI…AYSI), 163–183 (GAIG…GGAF), and 191–211 (WCFY…LIFL). An N-linked (GlcNAc...) asparagine glycan is attached at asparagine 221. 8 consecutive transmembrane segments (helical) span residues 234 to 254 (IGTA…QWGG), 264 to 284 (IIAL…FQIR), 306 to 326 (FFLF…PIWF), 342 to 362 (IPMV…VTAI), 366 to 386 (APLY…LTTF), 400 to 420 (IIFG…AQAV), 426 to 446 (VAVG…LFVS), and 503 to 523 (TWYV…GMEW).

Belongs to the major facilitator superfamily. TCR/Tet family.

The protein localises to the cell membrane. Its function is as follows. MFS-type efflux pump involved in the modulation susceptibility to azoles, including fluconazole, itraconazole, ketoconazole, miconazole and voriconazole. Confers also increased resistance chloramphenicol and thiamphenicol, suggesting that it acts as a pleiotropic drug transporter with a broad substrate spectrum. Finally, increases the tolerance to cycloheximide when expressed in S.cerevisiae, but not in dermatophyte species. This is MFS-type efflux pump MFS1 from Trichophyton rubrum (strain ATCC MYA-4607 / CBS 118892) (Athlete's foot fungus).